Here is a 638-residue protein sequence, read N- to C-terminus: Zinc finger protein 143 (638 aa).

M1 bears the N-acetylmethionine mark. K213 is covalently cross-linked (Glycyl lysine isopeptide (Lys-Gly) (interchain with G-Cter in SUMO2)). C2H2-type zinc fingers lie at residues F237–H261, Y267–H291, Y297–H321, and F327–H351. Phosphothreonine is present on T352. C2H2-type zinc fingers lie at residues Y357–H381, Y387–H411, and Y417–H440. Residue K406 forms a Glycyl lysine isopeptide (Lys-Gly) (interchain with G-Cter in SUMO2) linkage.

Belongs to the GLI C2H2-type zinc-finger protein family. As to quaternary structure, interacts with CHD8. Forms a complex with HCFC1 and ZNF143.

Its subcellular location is the nucleus. In terms of biological role, transcriptional activator. Activates the gene for selenocysteine tRNA (tRNAsec). Binds to the SPH motif of small nuclear RNA (snRNA) gene promoters. Participates in efficient U6 RNA polymerase III transcription via its interaction with CHD8. In complex with HCFC1 and ZNF143, regulates the expression of several genes, including AP2S1, ESCO2, OPHN1, RBL1, UBXN8 and ZNF32. This is Zinc finger protein 143 (Znf143) from Mus musculus (Mouse).